The chain runs to 585 residues: tRNA-guanine(15) transglycosylase (585 aa).

D95 (nucleophile) is an active-site residue. Residues D130 and A196 each coordinate substrate. Zn(2+) contacts are provided by C279, C281, and C284. The PUA domain maps to 507 to 582; that stretch reads VMRVVVNKEA…RAVKTRRGVE (76 aa).

This sequence belongs to the archaeosine tRNA-ribosyltransferase family. Zn(2+) is required as a cofactor.

It catalyses the reaction guanosine(15) in tRNA + 7-cyano-7-deazaguanine = 7-cyano-7-carbaguanosine(15) in tRNA + guanine. Its pathway is tRNA modification; archaeosine-tRNA biosynthesis. Its function is as follows. Exchanges the guanine residue with 7-cyano-7-deazaguanine (preQ0) at position 15 in the dihydrouridine loop (D-loop) of archaeal tRNAs. This chain is tRNA-guanine(15) transglycosylase, found in Pyrococcus furiosus (strain ATCC 43587 / DSM 3638 / JCM 8422 / Vc1).